The sequence spans 146 residues: Large ribosomal subunit protein uL15 (146 aa).

The segment covering 1–13 (MKLHELKPAEGSR) has biased composition (basic and acidic residues). The disordered stretch occupies residues 1 to 60 (MKLHELKPAEGSRKQRNRVGRGIGSGNGKTAGKGHKGQNARSGGGVRPGFEGGQNPLFRR). Composition is skewed to gly residues over residues 21-31 (RGIGSGNGKTA) and 42-52 (SGGGVRPGFEG).

The protein belongs to the universal ribosomal protein uL15 family. Part of the 50S ribosomal subunit.

Its function is as follows. Binds to the 23S rRNA. The sequence is that of Large ribosomal subunit protein uL15 from Lysinibacillus sphaericus (strain C3-41).